A 406-amino-acid polypeptide reads, in one-letter code: Tyrosine-specific transport system 2 (406 aa).

Transmembrane regions (helical) follow at residues 7-27 (FGSALIIAGTTIGAGMLAMPL), 38-58 (LLLLVGLWALLVYSGLLFVEV), 83-103 (IFATLSLLVLLYALSAAYITG), 119-139 (AMSLKTAIIIFTVVLGSFVVV), 150-170 (VLFIGKLIAFAFVLFMMLPKV), 183-203 (AFVVSAAPIFLTSFGFHVIMA), 219-239 (AILIGTAIPLAAYLVWQLATH), 279-299 (VFSSLALITSFLGVMLGVFEG), 314-334 (FVLTIAAFLPPLVFALFYPEG), 335-355 (FITALSYAGLLCAFYCLILPI), and 376-396 (NFALVLALLIGVVIMLIPFLI).

This sequence belongs to the amino acid/polyamine transporter 2 family. Mtr/TnaB/TyrP permease subfamily.

The protein localises to the cell inner membrane. The enzyme catalyses L-tyrosine(in) + H(+)(in) = L-tyrosine(out) + H(+)(out). Functionally, transports tyrosine across the cytoplasmic membrane. The transport system is energized by the proton motive force. This is Tyrosine-specific transport system 2 (tyrP-B) from Haemophilus influenzae (strain ATCC 51907 / DSM 11121 / KW20 / Rd).